The following is a 394-amino-acid chain: Ceramide glucosyltransferase (394 aa).

Over 1–10 (MALLDLAQEG) the chain is Lumenal. A helical transmembrane segment spans residues 11 to 32 (MALFGFVLFVVLWLMHFMSIIY). The Cytoplasmic segment spans residues 33-195 (TRLHLNKKAT…QVYFGTSHPR (163 aa)). Aspartate 92 is a short sequence motif (D1). At lysine 117 the chain carries N6-acetyllysine. Aspartate 144 is a short sequence motif (D2). A helical transmembrane segment spans residues 196–215 (SYISANVTGFKCVTGMSCLM). The Lumenal segment spans residues 216 to 287 (RKDVLDQAGG…KLRINMLPAT (72 aa)). Position 236 (aspartate 236) is a short sequence motif, D3. Aspartate 236 acts as the Proton acceptor in catalysis. The (Q/R)XXRW motif lies at 272-276 (RMIRW). A helical transmembrane segment spans residues 288–304 (IICEPISECFVASLIIG). At 305–309 (WAAHH) the chain is on the cytoplasmic side. The chain crosses the membrane as a helical span at residues 310-328 (VFRWDIMVFFMCHCLAWFI). Over 329–348 (FDYIQLRGVQGGTLCFSKLD) the chain is Lumenal. Residues 349-369 (YAVAWFIRESMTIYIFLSALW) form a helical membrane-spanning segment. Topologically, residues 370–394 (DPTISWRTGRYRLRCGGTAEEILDV) are cytoplasmic.

It belongs to the glycosyltransferase 2 family. Interacts with RTN1; regulates the ceramide glucosyltransferase activity of UGCG.

The protein localises to the golgi apparatus membrane. The catalysed reaction is an N-acylsphing-4-enine + UDP-alpha-D-glucose = a beta-D-glucosyl-(1&lt;-&gt;1')-N-acylsphing-4-enine + UDP + H(+). The enzyme catalyses UDP-alpha-D-xylose + an N-acylsphing-4-enine = a beta-D-xylosyl-(1&lt;-&gt;1')-N-acylsphing-4-enine + UDP + H(+). It carries out the reaction N-(9Z-octadecenoyl)-sphing-4-enine + UDP-alpha-D-xylose = beta-D-xylosyl-(1&lt;-&gt;1')-N-(9Z-octadecenoyl)-sphing-4-enine + UDP + H(+). The protein operates within lipid metabolism; sphingolipid metabolism. Functionally, participates in the initial step of the glucosylceramide-based glycosphingolipid/GSL synthetic pathway at the cytosolic surface of the Golgi. Catalyzes the transfer of glucose from UDP-glucose to ceramide to produce glucosylceramide/GlcCer (such as beta-D-glucosyl-(1&lt;-&gt;1')-N-acylsphing-4-enine). Glucosylceramide is the core component of glycosphingolipids/GSLs, amphipathic molecules consisting of a ceramide lipid moiety embedded in the outer leaflet of the membrane, linked to one of hundreds of different externally oriented oligosaccharide structures. Glycosphingolipids are essential components of membrane microdomains that mediate membrane trafficking and signal transduction. They are implicated in many fundamental cellular processes, including growth, differentiation, migration, morphogenesis, cell-to-cell and cell-to-matrix interactions. They are required for instance in the proper development and functioning of the nervous system. As an example of their role in signal transduction, they regulate the leptin receptor/LEPR in the leptin-mediated signaling pathway. They also play an important role in the establishment of the skin barrier regulating keratinocyte differentiation and the proper assembly of the cornified envelope. The biosynthesis of GSLs is also required for the proper intestinal endocytic uptake of nutritional lipids. Catalyzes the synthesis of xylosylceramide/XylCer (such as beta-D-xylosyl-(1&lt;-&gt;1')-N-acylsphing-4-enine) using UDP-Xyl as xylose donor. In Mus musculus (Mouse), this protein is Ceramide glucosyltransferase.